Consider the following 485-residue polypeptide: Aspartyl/glutamyl-tRNA(Asn/Gln) amidotransferase subunit B (485 aa).

This sequence belongs to the GatB/GatE family. GatB subfamily. In terms of assembly, heterotrimer of A, B and C subunits.

It carries out the reaction L-glutamyl-tRNA(Gln) + L-glutamine + ATP + H2O = L-glutaminyl-tRNA(Gln) + L-glutamate + ADP + phosphate + H(+). The catalysed reaction is L-aspartyl-tRNA(Asn) + L-glutamine + ATP + H2O = L-asparaginyl-tRNA(Asn) + L-glutamate + ADP + phosphate + 2 H(+). Functionally, allows the formation of correctly charged Asn-tRNA(Asn) or Gln-tRNA(Gln) through the transamidation of misacylated Asp-tRNA(Asn) or Glu-tRNA(Gln) in organisms which lack either or both of asparaginyl-tRNA or glutaminyl-tRNA synthetases. The reaction takes place in the presence of glutamine and ATP through an activated phospho-Asp-tRNA(Asn) or phospho-Glu-tRNA(Gln). The polypeptide is Aspartyl/glutamyl-tRNA(Asn/Gln) amidotransferase subunit B (Borrelia turicatae (strain 91E135)).